Reading from the N-terminus, the 361-residue chain is D-alanine--D-alanine ligase (361 aa).

An ATP-grasp domain is found at 139–336; it reads KLLLKEKEIS…FSQIIDNMIN (198 aa). 167–222 provides a ligand contact to ATP; it reads EKNLGYPMIVKPARLGSSIGVSKVVDRKNFEEAVKNVLLFDNKVLVEKWINAREIN. Residues D296, E307, and N309 each coordinate Mg(2+).

It belongs to the D-alanine--D-alanine ligase family. Requires Mg(2+) as cofactor. The cofactor is Mn(2+).

Its subcellular location is the cytoplasm. It catalyses the reaction 2 D-alanine + ATP = D-alanyl-D-alanine + ADP + phosphate + H(+). It functions in the pathway cell wall biogenesis; peptidoglycan biosynthesis. Its function is as follows. Cell wall formation. The protein is D-alanine--D-alanine ligase of Thermosipho melanesiensis (strain DSM 12029 / CIP 104789 / BI429).